Reading from the N-terminus, the 151-residue chain is Cytochrome c-type biogenesis protein CcmE (151 aa).

Residues 1–8 (MNPLRRKR) lie on the Cytoplasmic side of the membrane. Residues 9–29 (LLIILAILVGVGIAVGLALSA) form a helical; Signal-anchor for type II membrane protein membrane-spanning segment. Residues 30-151 (LQQNINLFYT…QSAPTPAKEG (122 aa)) lie on the Periplasmic side of the membrane. Residues H124 and Y128 each contribute to the heme site.

This sequence belongs to the CcmE/CycJ family.

It is found in the cell inner membrane. Functionally, heme chaperone required for the biogenesis of c-type cytochromes. Transiently binds heme delivered by CcmC and transfers the heme to apo-cytochromes in a process facilitated by CcmF and CcmH. This Pseudomonas fluorescens (strain SBW25) protein is Cytochrome c-type biogenesis protein CcmE.